Consider the following 180-residue polypeptide: NADH-quinone oxidoreductase subunit I (180 aa).

2 4Fe-4S ferredoxin-type domains span residues 50–80 and 90–119; these read LTRD…LQKA and EFFR…LTPD. Residues Cys-60, Cys-63, Cys-66, Cys-70, Cys-99, Cys-102, Cys-105, and Cys-109 each coordinate [4Fe-4S] cluster.

It belongs to the complex I 23 kDa subunit family. NDH-1 is composed of 13 different subunits. Subunits NuoA, H, J, K, L, M, N constitute the membrane sector of the complex. It depends on [4Fe-4S] cluster as a cofactor.

It localises to the cell inner membrane. The catalysed reaction is a quinone + NADH + 5 H(+)(in) = a quinol + NAD(+) + 4 H(+)(out). NDH-1 shuttles electrons from NADH, via FMN and iron-sulfur (Fe-S) centers, to quinones in the respiratory chain. The immediate electron acceptor for the enzyme in this species is believed to be ubiquinone. Couples the redox reaction to proton translocation (for every two electrons transferred, four hydrogen ions are translocated across the cytoplasmic membrane), and thus conserves the redox energy in a proton gradient. The chain is NADH-quinone oxidoreductase subunit I from Shigella sonnei (strain Ss046).